A 297-amino-acid chain; its full sequence is Vesicular-fusion protein SEC17 (297 aa).

The protein belongs to the SNAP family.

It is found in the membrane. Its function is as follows. Required for vesicular transport between the endoplasmic reticulum and the Golgi apparatus. The sequence is that of Vesicular-fusion protein SEC17 (SEC17) from Komagataella phaffii (strain GS115 / ATCC 20864) (Yeast).